The following is a 251-amino-acid chain: tRNA pseudouridine synthase A (251 aa).

Catalysis depends on Asp53, which acts as the Nucleophile. Tyr110 contributes to the substrate binding site.

It belongs to the tRNA pseudouridine synthase TruA family. As to quaternary structure, homodimer.

It carries out the reaction uridine(38/39/40) in tRNA = pseudouridine(38/39/40) in tRNA. Formation of pseudouridine at positions 38, 39 and 40 in the anticodon stem and loop of transfer RNAs. In Mesoplasma florum (strain ATCC 33453 / NBRC 100688 / NCTC 11704 / L1) (Acholeplasma florum), this protein is tRNA pseudouridine synthase A.